Reading from the N-terminus, the 140-residue chain is Large ribosomal subunit protein uL11 (140 aa).

This sequence belongs to the universal ribosomal protein uL11 family. In terms of assembly, part of the ribosomal stalk of the 50S ribosomal subunit. Interacts with L10 and the large rRNA to form the base of the stalk. L10 forms an elongated spine to which L12 dimers bind in a sequential fashion forming a multimeric L10(L12)X complex. In terms of processing, one or more lysine residues are methylated.

Functionally, forms part of the ribosomal stalk which helps the ribosome interact with GTP-bound translation factors. The protein is Large ribosomal subunit protein uL11 of Lawsonia intracellularis (strain PHE/MN1-00).